The chain runs to 576 residues: Sulfite reductase [NADPH] hemoprotein beta-component (576 aa).

Residues cysteine 439, cysteine 445, cysteine 485, and cysteine 489 each contribute to the [4Fe-4S] cluster site. Cysteine 489 is a siroheme binding site.

It belongs to the nitrite and sulfite reductase 4Fe-4S domain family. Alpha(8)-beta(8). The alpha component is a flavoprotein, the beta component is a hemoprotein. The cofactor is siroheme. [4Fe-4S] cluster is required as a cofactor.

The enzyme catalyses hydrogen sulfide + 3 NADP(+) + 3 H2O = sulfite + 3 NADPH + 4 H(+). It functions in the pathway sulfur metabolism; hydrogen sulfide biosynthesis; hydrogen sulfide from sulfite (NADPH route): step 1/1. Functionally, component of the sulfite reductase complex that catalyzes the 6-electron reduction of sulfite to sulfide. This is one of several activities required for the biosynthesis of L-cysteine from sulfate. This Aliivibrio fischeri (strain ATCC 700601 / ES114) (Vibrio fischeri) protein is Sulfite reductase [NADPH] hemoprotein beta-component.